We begin with the raw amino-acid sequence, 729 residues long: MLYKGDTLYLDWLEDGIAELVFDAPGSVNKLDTATVASLGEAIGVLEQQSDLKGLLLRSNKAAFIVGADITEFLSLFLVPEEQLSQWLHFANSVFNRLEDLPVPTIAAVNGYALGGGCECVLATDYRLATPDLRIGLPETKLGIMPGFGGSVRMPRMLGADSALEIIAAGKDVGADQALKIGLVDGVVKAEKLVEGAKAILRQAINGDLDWKAKRQPKLEPLKLSKIEATMSFTIAKGMVAQTAGKHYPAPITAVKTIEAAARFGREEALNLENKSFVPLAHTNEARALVGIFLNDQYVKGKAKKLTKDVETPKQAAVLGAGIMGGGIAYQSAWKGVPVVMKDINDKSLTLGMTEAAKLLNKQLERGKIDGLKLAGVISTIHPTLDYAGFDRVDVVVEAVVENPKVKKAVLAETEQKVRPDTVLASNTSTIPISELANALERPENFCGMHFFNPVHRMPLVEIIRGEKSSDETIAKVVAWASKMGKTPIVVNDCPGFFVNRVLFPYFAGFSQLLRDGADFRKIDKVMEKQFGWPMGPAYLLDVVGIDTAHHAQAVMAAGFPQRMQKDYRDAIDALFDANRFGQKNGLGFWRYKEDSKGKPKKEEDAAVDDLLAEVSQPKRDFSEEEIIARMMIPMVNEVVRCLEEGIIATPAEADMALVYGLGFPPFHGGAFRWLDTLGSAKYLDMAQQYQHLGPLYEVPEGLRNKARHNEPYYPQVEPARAVGDLKTA.

Residues 1-189 form an enoyl-CoA hydratase/isomerase region; the sequence is MLYKGDTLYL…KIGLVDGVVK (189 aa). Aspartate 296 lines the substrate pocket. Residues 311–729 are 3-hydroxyacyl-CoA dehydrogenase; it reads ETPKQAAVLG…ARAVGDLKTA (419 aa). Residues methionine 324, aspartate 343, 400 to 402, lysine 407, and serine 429 each bind NAD(+); that span reads VVE. Histidine 450 serves as the catalytic For 3-hydroxyacyl-CoA dehydrogenase activity. An NAD(+)-binding site is contributed by asparagine 453. Positions 500 and 660 each coordinate substrate.

This sequence in the N-terminal section; belongs to the enoyl-CoA hydratase/isomerase family. The protein in the C-terminal section; belongs to the 3-hydroxyacyl-CoA dehydrogenase family. As to quaternary structure, heterotetramer of two alpha chains (FadB) and two beta chains (FadA).

The catalysed reaction is a (3S)-3-hydroxyacyl-CoA + NAD(+) = a 3-oxoacyl-CoA + NADH + H(+). The enzyme catalyses a (3S)-3-hydroxyacyl-CoA = a (2E)-enoyl-CoA + H2O. It catalyses the reaction a 4-saturated-(3S)-3-hydroxyacyl-CoA = a (3E)-enoyl-CoA + H2O. It carries out the reaction (3S)-3-hydroxybutanoyl-CoA = (3R)-3-hydroxybutanoyl-CoA. The catalysed reaction is a (3Z)-enoyl-CoA = a 4-saturated (2E)-enoyl-CoA. The enzyme catalyses a (3E)-enoyl-CoA = a 4-saturated (2E)-enoyl-CoA. The protein operates within lipid metabolism; fatty acid beta-oxidation. Its function is as follows. Involved in the aerobic and anaerobic degradation of long-chain fatty acids via beta-oxidation cycle. Catalyzes the formation of 3-oxoacyl-CoA from enoyl-CoA via L-3-hydroxyacyl-CoA. It can also use D-3-hydroxyacyl-CoA and cis-3-enoyl-CoA as substrate. This is Fatty acid oxidation complex subunit alpha from Escherichia fergusonii (strain ATCC 35469 / DSM 13698 / CCUG 18766 / IAM 14443 / JCM 21226 / LMG 7866 / NBRC 102419 / NCTC 12128 / CDC 0568-73).